The following is a 229-amino-acid chain: Large ribosomal subunit protein uL1 (229 aa).

The protein belongs to the universal ribosomal protein uL1 family. As to quaternary structure, part of the 50S ribosomal subunit.

Binds directly to 23S rRNA. The L1 stalk is quite mobile in the ribosome, and is involved in E site tRNA release. Its function is as follows. Protein L1 is also a translational repressor protein, it controls the translation of the L11 operon by binding to its mRNA. The sequence is that of Large ribosomal subunit protein uL1 from Streptococcus suis (strain 98HAH33).